The chain runs to 638 residues: 9-cis-epoxycarotenoid dioxygenase NCED1, chloroplastic (638 aa).

The transit peptide at 1–80 directs the protein to the chloroplast; sequence MQRICPAHCS…QTEQEDEQLV (80 aa). Composition is skewed to low complexity over residues 28–37, 44–69, and 92–102; these read AASAAPQSPS, ASAA…TRTP, and TTNGRAAPSQS. Disordered regions lie at residues 28–80 and 92–113; these read AASA…EQLV and TTNG…PAAA. 4 residues coordinate Fe cation: His331, His380, His446, and His624.

It belongs to the carotenoid oxygenase family. Requires Fe(2+) as cofactor.

Its subcellular location is the plastid. It localises to the chloroplast. The catalysed reaction is a 9-cis-epoxycarotenoid + O2 = a 12'-apo-carotenal + 2-cis,4-trans-xanthoxin. It catalyses the reaction 9-cis-violaxanthin + O2 = (3S,5R,6S)-5,6-epoxy-3-hydroxy-5,6-dihydro-12'-apo-beta-caroten-12'-al + 2-cis,4-trans-xanthoxin. It carries out the reaction 9'-cis-neoxanthin + O2 = (3S,5R,6R)-3,5-dihydroxy-6,7-didehydro-5,6-dihydro-12'-apo-beta-caroten-12'-al + 2-cis,4-trans-xanthoxin. Functionally, has a 11,12(11',12') 9-cis epoxycarotenoid cleavage activity. Catalyzes the first step of abscisic-acid biosynthesis from carotenoids. The chain is 9-cis-epoxycarotenoid dioxygenase NCED1, chloroplastic from Oryza sativa subsp. japonica (Rice).